A 339-amino-acid chain; its full sequence is Ketol-acid reductoisomerase (NADP(+)) (339 aa).

One can recognise a KARI N-terminal Rossmann domain in the interval 1–182 (MRVYYDRDAD…GGGRAGIIET (182 aa)). Residues 24–27 (YGSQ), Arg-48, Ser-51, and 83–86 (DEGQ) contribute to the NADP(+) site. His-108 is an active-site residue. Position 134 (Gly-134) interacts with NADP(+). The KARI C-terminal knotted domain occupies 183-328 (TFKEEVETDL…EKLRAMMPWI (146 aa)). Mg(2+) is bound by residues Asp-191, Glu-195, Glu-227, and Glu-231. Residue Ser-252 coordinates substrate.

This sequence belongs to the ketol-acid reductoisomerase family. Requires Mg(2+) as cofactor.

The enzyme catalyses (2R)-2,3-dihydroxy-3-methylbutanoate + NADP(+) = (2S)-2-acetolactate + NADPH + H(+). The catalysed reaction is (2R,3R)-2,3-dihydroxy-3-methylpentanoate + NADP(+) = (S)-2-ethyl-2-hydroxy-3-oxobutanoate + NADPH + H(+). It functions in the pathway amino-acid biosynthesis; L-isoleucine biosynthesis; L-isoleucine from 2-oxobutanoate: step 2/4. The protein operates within amino-acid biosynthesis; L-valine biosynthesis; L-valine from pyruvate: step 2/4. Its function is as follows. Involved in the biosynthesis of branched-chain amino acids (BCAA). Catalyzes an alkyl-migration followed by a ketol-acid reduction of (S)-2-acetolactate (S2AL) to yield (R)-2,3-dihydroxy-isovalerate. In the isomerase reaction, S2AL is rearranged via a Mg-dependent methyl migration to produce 3-hydroxy-3-methyl-2-ketobutyrate (HMKB). In the reductase reaction, this 2-ketoacid undergoes a metal-dependent reduction by NADPH to yield (R)-2,3-dihydroxy-isovalerate. The protein is Ketol-acid reductoisomerase (NADP(+)) of Gluconobacter oxydans (strain 621H) (Gluconobacter suboxydans).